A 430-amino-acid chain; its full sequence is Enolase (430 aa).

Residue Gln167 coordinates (2R)-2-phosphoglycerate. The Proton donor role is filled by Glu209. 3 residues coordinate Mg(2+): Asp246, Glu287, and Asp314. 4 residues coordinate (2R)-2-phosphoglycerate: Lys339, Arg368, Ser369, and Lys390. Residue Lys339 is the Proton acceptor of the active site.

This sequence belongs to the enolase family. It depends on Mg(2+) as a cofactor.

The protein resides in the cytoplasm. It is found in the secreted. Its subcellular location is the cell surface. The enzyme catalyses (2R)-2-phosphoglycerate = phosphoenolpyruvate + H2O. It functions in the pathway carbohydrate degradation; glycolysis; pyruvate from D-glyceraldehyde 3-phosphate: step 4/5. Its function is as follows. Catalyzes the reversible conversion of 2-phosphoglycerate (2-PG) into phosphoenolpyruvate (PEP). It is essential for the degradation of carbohydrates via glycolysis. This is Enolase from Prochlorococcus marinus (strain MIT 9215).